Here is a 207-residue protein sequence, read N- to C-terminus: Large ribosomal subunit protein uL4 (207 aa).

The segment at 55-75 (SAVRGGGRKPWRQKGTGRARQ) is disordered. Positions 60–71 (GGRKPWRQKGTG) are enriched in basic residues.

This sequence belongs to the universal ribosomal protein uL4 family. Part of the 50S ribosomal subunit.

One of the primary rRNA binding proteins, this protein initially binds near the 5'-end of the 23S rRNA. It is important during the early stages of 50S assembly. It makes multiple contacts with different domains of the 23S rRNA in the assembled 50S subunit and ribosome. Its function is as follows. Forms part of the polypeptide exit tunnel. This chain is Large ribosomal subunit protein uL4, found in Staphylococcus epidermidis (strain ATCC 35984 / DSM 28319 / BCRC 17069 / CCUG 31568 / BM 3577 / RP62A).